A 213-amino-acid polypeptide reads, in one-letter code: MQAYQKDFIQLALKAQALKFGEFTLKSGRVSPYFFNAGQFQTGSALASLGRFYAQALVDAGVEFDMIFGPAYKGIPLATTTATALADHHQKDMPFAYNRKEVKAHGEGGTLVGAPIKGRVAIIDDVITAGTAVREVLSLIDAAGAKPAAIVVGLNRQEKGQGELSAIQELEQETGVPVISIINLNHVLQYLETQGDSENLAKVTAYRQQYGVE.

K26 is a binding site for 5-phospho-alpha-D-ribose 1-diphosphate. 34 to 35 (FF) lines the orotate pocket. 5-phospho-alpha-D-ribose 1-diphosphate-binding positions include 72 to 73 (YK), R99, K100, K103, H105, and 124 to 132 (DDVITAGTA). Positions 128 and 156 each coordinate orotate.

Belongs to the purine/pyrimidine phosphoribosyltransferase family. PyrE subfamily. In terms of assembly, homodimer. Mg(2+) is required as a cofactor.

It carries out the reaction orotidine 5'-phosphate + diphosphate = orotate + 5-phospho-alpha-D-ribose 1-diphosphate. It participates in pyrimidine metabolism; UMP biosynthesis via de novo pathway; UMP from orotate: step 1/2. In terms of biological role, catalyzes the transfer of a ribosyl phosphate group from 5-phosphoribose 1-diphosphate to orotate, leading to the formation of orotidine monophosphate (OMP). This is Orotate phosphoribosyltransferase from Saccharophagus degradans (strain 2-40 / ATCC 43961 / DSM 17024).